Reading from the N-terminus, the 74-residue chain is Ubiquitin-like protein FUBI (74 aa).

This sequence belongs to the ubiquitin family.

The chain is Ubiquitin-like protein FUBI (FAU) from Bos taurus (Bovine).